The chain runs to 389 residues: DEAD-box ATP-dependent RNA helicase CshC (389 aa).

The Q motif motif lies at 1–26; it reads MIKDMQPFLQQAWEKAGFKELTEIQK. One can recognise a Helicase ATP-binding domain in the interval 29 to 199; the sequence is IPTILEGQDV…RDLAVEPQLV (171 aa). Residue 42-49 participates in ATP binding; sequence SPTGTGKT. The short motif at 147–150 is the DEAD box element; sequence DEFD. A Helicase C-terminal domain is found at 209–379; the sequence is LVEHTYIICE…TKPKAPKKKK (171 aa). A disordered region spans residues 368 to 389; sequence VETKPKAPKKKKPAFTGKKKPR. Basic residues predominate over residues 373-389; it reads KAPKKKKPAFTGKKKPR.

The catalysed reaction is ATP + H2O = ADP + phosphate + H(+). Functionally, DEAD-box RNA helicase. Probably has an RNA-dependent ATPase activity and a 3' to 5' RNA helicase activity that uses the energy of ATP hydrolysis to destabilize and unwind short RNA duplexes. This chain is DEAD-box ATP-dependent RNA helicase CshC (cshC), found in Bacillus cereus (strain ATCC 14579 / DSM 31 / CCUG 7414 / JCM 2152 / NBRC 15305 / NCIMB 9373 / NCTC 2599 / NRRL B-3711).